The chain runs to 404 residues: MSKVNVNKVVVAYSGGLDTSVIIPWLKENYDCEVVAFVADVGQGAEELEGIEAKAKASGASECYIADLKEEMVADYIFPTLKTGAYYEGKYLLGTSMARPIIAKAQVEVARKVGADALCHGCTGKGNDQVRFEGAFAALAPDLHVIAPWREWDLVSREECLDYLAERNIPCSASLTKIYSRDANAWHISTEGGVLEDTWNAPNEDCWAWTVDPEQAPNEAETVTLKVAKGEIVEVDGEAMTPYNALVYLNEKGAKHGVGRIDIVENRLVGMKSRGCYETPGGTIMMEALRAVEQLVLDKASFEFREELGLKASHLVYDGRWFTPLCKSILAASEELAQDVNGEVVVKLYKGQATVTQKRSDNSLYSEEFATFGEDEVYDQSHAEGFIRLYSLSSRIRALNSQKK.

ATP-binding positions include Ala-12–Ser-20 and Ala-39. Residues Tyr-91 and Ser-96 each contribute to the L-citrulline site. Residue Gly-121 coordinates ATP. Residues Thr-123, Asn-127, and Asp-128 each contribute to the L-aspartate site. Asn-127 is an L-citrulline binding site. 5 residues coordinate L-citrulline: Arg-131, Ser-180, Ser-189, Glu-265, and Tyr-277.

It belongs to the argininosuccinate synthase family. Type 1 subfamily. In terms of assembly, homotetramer.

Its subcellular location is the cytoplasm. It catalyses the reaction L-citrulline + L-aspartate + ATP = 2-(N(omega)-L-arginino)succinate + AMP + diphosphate + H(+). It participates in amino-acid biosynthesis; L-arginine biosynthesis; L-arginine from L-ornithine and carbamoyl phosphate: step 2/3. The protein is Argininosuccinate synthase of Vibrio campbellii (strain ATCC BAA-1116).